The sequence spans 139 residues: Succinate dehydrogenase assembly factor 2, mitochondrial (139 aa).

Residues 1–28 constitute a mitochondrion transit peptide; the sequence is MLRKTNLSNITTLLRSARCMNRMPQLRF.

The protein belongs to the SDHAF2 family. Interacts with the flavoprotein subunit within the SDH catalytic dimer.

It localises to the mitochondrion. It is found in the mitochondrion matrix. Functionally, plays an essential role in the assembly of succinate dehydrogenase (SDH), an enzyme complex (also referred to as respiratory complex II) that is a component of both the tricarboxylic acid (TCA) cycle and the mitochondrial electron transport chain, and which couples the oxidation of succinate to fumarate with the reduction of ubiquinone (coenzyme Q) to ubiquinol. Required for flavinylation (covalent attachment of FAD) of the flavoprotein subunit of the SDH catalytic dimer. This Schizosaccharomyces pombe (strain 972 / ATCC 24843) (Fission yeast) protein is Succinate dehydrogenase assembly factor 2, mitochondrial.